The sequence spans 1879 residues: Protein TIC 214 (1879 aa).

6 helical membrane-spanning segments follow: residues 18–38 (IINS…FSIG), 64–84 (FITG…HLAL), 87–107 (PYTI…WTNP), 124–144 (LSIQ…HFIL), 172–192 (VGWL…LVWI), and 218–238 (IAPI…GRIP). Disordered regions lie at residues 245–305 (ETSK…IDET) and 586–702 (ISTS…DEPM). 2 stretches are compositionally biased toward acidic residues: residues 253–268 (AETE…EIET) and 295–305 (EKEDPDKIDET). The span at 586 to 688 (ISTSTPTSTP…SIPASTSTST (103 aa)) shows a compositional bias: low complexity. The segment covering 691–701 (IKSKDEPKDEP) has biased composition (basic and acidic residues).

The protein belongs to the TIC214 family. In terms of assembly, part of the Tic complex.

It is found in the plastid. The protein localises to the chloroplast inner membrane. Involved in protein precursor import into chloroplasts. May be part of an intermediate translocation complex acting as a protein-conducting channel at the inner envelope. The sequence is that of Protein TIC 214 from Cucumis sativus (Cucumber).